We begin with the raw amino-acid sequence, 79 residues long: ATP synthase subunit c (79 aa).

The next 2 helical transmembrane spans lie at M11–L31 and F53–Y73.

Belongs to the ATPase C chain family. As to quaternary structure, F-type ATPases have 2 components, F(1) - the catalytic core - and F(0) - the membrane proton channel. F(1) has five subunits: alpha(3), beta(3), gamma(1), delta(1), epsilon(1). F(0) has three main subunits: a(1), b(2) and c(10-14). The alpha and beta chains form an alternating ring which encloses part of the gamma chain. F(1) is attached to F(0) by a central stalk formed by the gamma and epsilon chains, while a peripheral stalk is formed by the delta and b chains.

The protein resides in the cell inner membrane. In terms of biological role, f(1)F(0) ATP synthase produces ATP from ADP in the presence of a proton or sodium gradient. F-type ATPases consist of two structural domains, F(1) containing the extramembraneous catalytic core and F(0) containing the membrane proton channel, linked together by a central stalk and a peripheral stalk. During catalysis, ATP synthesis in the catalytic domain of F(1) is coupled via a rotary mechanism of the central stalk subunits to proton translocation. Its function is as follows. Key component of the F(0) channel; it plays a direct role in translocation across the membrane. A homomeric c-ring of between 10-14 subunits forms the central stalk rotor element with the F(1) delta and epsilon subunits. The chain is ATP synthase subunit c from Citrobacter koseri (strain ATCC BAA-895 / CDC 4225-83 / SGSC4696).